The chain runs to 381 residues: L-lactate dehydrogenase (381 aa).

The FMN hydroxy acid dehydrogenase domain occupies M1–G380. A substrate-binding site is contributed by Y24. FMN is bound by residues S106 and Q127. Y129 serves as a coordination point for substrate. T155 lines the FMN pocket. R164 serves as a coordination point for substrate. K251 contributes to the FMN binding site. The active-site Proton acceptor is the H275. R278 provides a ligand contact to substrate. An FMN-binding site is contributed by D306 to R330.

It belongs to the FMN-dependent alpha-hydroxy acid dehydrogenase family. As to quaternary structure, homotetramer. The cofactor is FMN.

The protein resides in the cell inner membrane. The catalysed reaction is (S)-lactate + A = pyruvate + AH2. Its function is as follows. Catalyzes the conversion of L-lactate to pyruvate. Is coupled to the respiratory chain. The protein is L-lactate dehydrogenase of Pseudomonas putida (strain W619).